The chain runs to 217 residues: Nucleoredoxin-like protein 1 (217 aa).

The Thioredoxin domain occupies 1-164 (MASLFSGRIL…AAELLDRSFL (164 aa)). A compositionally biased stretch (basic and acidic residues) spans 188–204 (VDRDVGRERGRNGRDSG). The tract at residues 188–217 (VDRDVGRERGRNGRDSGDPQGDAGTRAELW) is disordered.

The protein belongs to the nucleoredoxin family. Interacts with isoform 1 of BSG. Expressed in the retina (at protein level). Expressed predominantly by photoreceptors in both the inner and outer nuclear layer (at protein level). Not expressed in the testis, spleen, intestine, lung, cerebellum, or kidney.

It localises to the cell projection. The protein localises to the cilium. It is found in the photoreceptor outer segment. In terms of biological role, plays an important role in retinal cone photoreceptor survival. In association with glucose transporter SLC16A1/GLUT1 and BSG, promotes retinal cone survival by enhancing aerobic glycolysis and accelerating the entry of glucose into photoreceptors. May play a role in cone cell viability, slowing down cone degeneration, does not seem to play a role in degenerating rods. In Mus musculus (Mouse), this protein is Nucleoredoxin-like protein 1 (Nxnl1).